A 381-amino-acid polypeptide reads, in one-letter code: Queuine tRNA-ribosyltransferase (381 aa).

Asp-96 (proton acceptor) is an active-site residue. Substrate contacts are provided by residues 96–100 (DSGGF), Asp-150, Gln-193, and Gly-220. The RNA binding stretch occupies residues 251 to 257 (GVGSPDS). Residue Asp-270 is the Nucleophile of the active site. The tract at residues 275–279 (TRIAR) is RNA binding; important for wobble base 34 recognition. Positions 308, 310, 313, and 339 each coordinate Zn(2+).

Belongs to the queuine tRNA-ribosyltransferase family. As to quaternary structure, homodimer. Within each dimer, one monomer is responsible for RNA recognition and catalysis, while the other monomer binds to the replacement base PreQ1. The cofactor is Zn(2+).

The enzyme catalyses 7-aminomethyl-7-carbaguanine + guanosine(34) in tRNA = 7-aminomethyl-7-carbaguanosine(34) in tRNA + guanine. It functions in the pathway tRNA modification; tRNA-queuosine biosynthesis. Catalyzes the base-exchange of a guanine (G) residue with the queuine precursor 7-aminomethyl-7-deazaguanine (PreQ1) at position 34 (anticodon wobble position) in tRNAs with GU(N) anticodons (tRNA-Asp, -Asn, -His and -Tyr). Catalysis occurs through a double-displacement mechanism. The nucleophile active site attacks the C1' of nucleotide 34 to detach the guanine base from the RNA, forming a covalent enzyme-RNA intermediate. The proton acceptor active site deprotonates the incoming PreQ1, allowing a nucleophilic attack on the C1' of the ribose to form the product. After dissociation, two additional enzymatic reactions on the tRNA convert PreQ1 to queuine (Q), resulting in the hypermodified nucleoside queuosine (7-(((4,5-cis-dihydroxy-2-cyclopenten-1-yl)amino)methyl)-7-deazaguanosine). This chain is Queuine tRNA-ribosyltransferase, found in Bacillus pumilus (strain SAFR-032).